Here is a 366-residue protein sequence, read N- to C-terminus: Chorismate synthase (366 aa).

R48 is an NADP(+) binding site. Residues 125–127 (RSS), 241–242 (NA), G285, 300–304 (KPTSS), and R326 each bind FMN.

It belongs to the chorismate synthase family. As to quaternary structure, homotetramer. Requires FMNH2 as cofactor.

The catalysed reaction is 5-O-(1-carboxyvinyl)-3-phosphoshikimate = chorismate + phosphate. Its pathway is metabolic intermediate biosynthesis; chorismate biosynthesis; chorismate from D-erythrose 4-phosphate and phosphoenolpyruvate: step 7/7. Its function is as follows. Catalyzes the anti-1,4-elimination of the C-3 phosphate and the C-6 proR hydrogen from 5-enolpyruvylshikimate-3-phosphate (EPSP) to yield chorismate, which is the branch point compound that serves as the starting substrate for the three terminal pathways of aromatic amino acid biosynthesis. This reaction introduces a second double bond into the aromatic ring system. The polypeptide is Chorismate synthase (Paracoccus denitrificans (strain Pd 1222)).